The following is a 214-amino-acid chain: Uracil phosphoribosyltransferase (214 aa).

5-phospho-alpha-D-ribose 1-diphosphate-binding positions include Arg-107 and 135–143 (DPMLATGKT). Residues Ile-198 and 203–205 (GDA) each bind uracil. Asp-204 provides a ligand contact to 5-phospho-alpha-D-ribose 1-diphosphate.

It belongs to the UPRTase family. Mg(2+) is required as a cofactor.

It catalyses the reaction UMP + diphosphate = 5-phospho-alpha-D-ribose 1-diphosphate + uracil. It participates in pyrimidine metabolism; UMP biosynthesis via salvage pathway; UMP from uracil: step 1/1. Allosterically activated by GTP. Functionally, catalyzes the conversion of uracil and 5-phospho-alpha-D-ribose 1-diphosphate (PRPP) to UMP and diphosphate. The sequence is that of Uracil phosphoribosyltransferase from Aeropyrum pernix (strain ATCC 700893 / DSM 11879 / JCM 9820 / NBRC 100138 / K1).